A 423-amino-acid polypeptide reads, in one-letter code: Glucose-1-phosphate adenylyltransferase (423 aa).

Alpha-D-glucose 1-phosphate is bound by residues Tyr112, Gly177, Glu192–Lys193, and Ser210.

Belongs to the bacterial/plant glucose-1-phosphate adenylyltransferase family. As to quaternary structure, homotetramer.

It carries out the reaction alpha-D-glucose 1-phosphate + ATP + H(+) = ADP-alpha-D-glucose + diphosphate. It functions in the pathway glycan biosynthesis; glycogen biosynthesis. Involved in the biosynthesis of ADP-glucose, a building block required for the elongation reactions to produce glycogen. Catalyzes the reaction between ATP and alpha-D-glucose 1-phosphate (G1P) to produce pyrophosphate and ADP-Glc. The polypeptide is Glucose-1-phosphate adenylyltransferase (Rhodospirillum rubrum (strain ATCC 11170 / ATH 1.1.1 / DSM 467 / LMG 4362 / NCIMB 8255 / S1)).